We begin with the raw amino-acid sequence, 85 residues long: U4-theraphotoxin-Hhn1z (85 aa).

The N-terminal stretch at 1 to 22 (MKMTLIAILTCAAVLVLHTTAA) is a signal peptide. The propeptide occupies 23-48 (EELEAESQLMEVGMPDTELEAVDEER). 3 disulfide bridges follow: Cys-52–Cys-66, Cys-56–Cys-77, and Cys-71–Cys-82.

It belongs to the neurotoxin 12 (Hwtx-2) family. 02 (Hwtx-2) subfamily. Expressed by the venom gland.

The protein localises to the secreted. In terms of biological role, postsynaptic neurotoxin. The sequence is that of U4-theraphotoxin-Hhn1z from Cyriopagopus hainanus (Chinese bird spider).